Here is a 1061-residue protein sequence, read N- to C-terminus: Error-prone DNA polymerase (1061 aa).

Belongs to the DNA polymerase type-C family. DnaE2 subfamily.

It localises to the cytoplasm. The enzyme catalyses DNA(n) + a 2'-deoxyribonucleoside 5'-triphosphate = DNA(n+1) + diphosphate. DNA polymerase involved in damage-induced mutagenesis and translesion synthesis (TLS). It is not the major replicative DNA polymerase. This chain is Error-prone DNA polymerase, found in Bdellovibrio bacteriovorus (strain ATCC 15356 / DSM 50701 / NCIMB 9529 / HD100).